The sequence spans 391 residues: Ferrochelatase (391 aa).

Fe cation contacts are provided by histidine 196 and glutamate 281.

It belongs to the ferrochelatase family.

The protein resides in the cytoplasm. It catalyses the reaction heme b + 2 H(+) = protoporphyrin IX + Fe(2+). It functions in the pathway porphyrin-containing compound metabolism; protoheme biosynthesis; protoheme from protoporphyrin-IX: step 1/1. Catalyzes the ferrous insertion into protoporphyrin IX. The polypeptide is Ferrochelatase (Synechococcus sp. (strain CC9311)).